We begin with the raw amino-acid sequence, 1486 residues long: MKPLAIPANHGVMGQQEKHSLPADFTKLHLTDSLHPQVTHVSSSHSGCSITSDSGSSSLSDIYQATESEAGDMDLSGLPETAVDSEDDDDEEDIERASDPLMSRDIVRDCLEKDPIDRTDDDIEQLLEFMHQLPAFANMTMSVRRELCAVMVFAVVERAGTIVLNDGEELDSWSVILNGSVEVTYPDGKAEILCMGNSFGVSPTMDKEYMKGVMRTKVDDCQFVCIAQQDYCRILNQVEKNMQKVEEEGEIVMVKEHRELDRTGTRKGHIVIKGTSERLTMHLVEEHSVVDPTFIEDFLLTYRTFLCSPMEVGKKLLEWFNDPSLRDKVTRVVLLWVNNHFNDFEGDPAMTRFLEEFENNLEREKMGGHLRLLNIACAAKAKRRLMTLTKPAREAPLPFILLGGSEKGFGIFVDSVDSASKATEAGLKRGDQILEVNGQNFENIQLSKAMEILRNNTHLSITVKTNLFVFKELLTRLSEEKRNGAPHLPKIGDIKKASRYSIPDLAVDVEQVIGLEKVNKKSKANTVGGRNKLKKILDKTRISILPQKPYNDIGIGQSQDDSIVGLRQTKHIPTALPVSGTLSSSNPDLLQSHHRILDFSATPDLPDQVLRVFKADQQSRYIMISKDTTAKEVVVQAIREFAVTATPDQYSLCEVSVTPEGVIKQRRLPDQLSKLADRIQLSGRYYLKNNMETETLCSDEDAQELLRESQISLLQLSTVEVATQLSMRNFELFRNIEPTEYIDDLFKLKSKTSCANLKTFEEVINQETFWVASEILRETNQLKRMKIIKHFIKIALHCRECKNFNSMFAIISGLNLAPVARLRTTWEKLPNKYEKLFQDLQDLFDPSRNMAKYRNVLNSQNLQPPIIPLFPVIKKDLTFLHEGNDSKVDGLVNFEKLRMIAKEIRHVGRMASVNMDPALMFRTRKKKWRSLGSLSQGSTNATVLDVAQTGGHKKRVRRSSFLNAKKLYEDAQMARKVKQYLSNLELEMDEESLQTLSLQCEPATNTLPKNPTDKKPVKSETSPVAPRAGLQPKAQPQPQPPQPPHKLNQGLQVPAVSLYPSRKKVPVKDLPPFGINSPQALKKILSLSEEGSLERHRRPAEDTISNTSSQLSSPPTSPQSSPRKGYTLAPSGTVDNFSDSGHSEISSRSSIVSNSSFDSLPVSLPDERRQRPSVSIVETSLASGRLERRPAVEPDQYSLGSCAPLSESRGLYAAATVISSPSTEELSQDQGDRASLDAADSGRGSWTSCSSGSHDNIQTIQHQRSWETLPFGHTHFDYPGDAAGLWASSSHMDQIMFPDHSAKYSRQSQSRESLDQAQSRASWASSTGYWGEDSEGDTGTIKRRGGKDVSLDADSSSMTAVTAEEAKPAAMAAHIAVTPSAAKGLIARKEGRYREPPPTPPGYVGIPITDFPEAHPHPARKPPDYTVALQRSRMLARPAEPPAPGSARPAPRPQWHRPGDGDPRAGPCAPPGLTAEEDEDEQVSAV.

2 disordered regions span residues histidine 40 to leucine 59 and serine 68 to leucine 101. The span at valine 83–isoleucine 94 shows a compositional bias: acidic residues. A nucleoside 3',5'-cyclic phosphate is bound at residue alanine 135–valine 252. The 114-residue stretch at lysine 267–lysine 380 folds into the N-terminal Ras-GEF domain. Residues leucine 385–phenylalanine 468 enclose the PDZ domain. Serine 501 is modified (phosphoserine). Positions proline 606–glutamate 692 constitute a Ras-associating domain. Threonine 644 carries the phosphothreonine modification. The 228-residue stretch at serine 717–leucine 944 folds into the Ras-GEF domain. A phosphoserine mark is found at serine 806, serine 930, serine 933, and serine 1022. The tract at residues proline 1002 to glutamine 1049 is disordered. Residues glutamine 1035–proline 1044 show a composition bias toward pro residues. Residues serine 1077, serine 1086, serine 1092, serine 1113, serine 1117, serine 1156, and serine 1173 each carry the phosphoserine modification. 4 disordered regions span residues glutamate 1090–isoleucine 1176, proline 1221–histidine 1254, lysine 1303–serine 1357, and glycine 1391–valine 1486. 2 stretches are compositionally biased toward low complexity: residues serine 1105–proline 1122 and serine 1138–serine 1159. Composition is skewed to polar residues over residues glycine 1244–histidine 1254 and tyrosine 1304–glycine 1328. Residues alanine 1475–valine 1486 show a composition bias toward acidic residues.

This sequence belongs to the RAPGEF2 family. In terms of assembly, found in a complex, at least composed of KIDINS220, MAGI2, NTRK1 and RAPGEF2; the complex is mainly formed at late endosomes in a neuronal growth factor (NGF)-dependent manner. Interacts (via C-terminal domain) with NEDD4 (via WW domains); this interaction leads to ubiquitination and degradation via the proteasome pathway in a cAMP-independent manner. Interacts with MAGI1 (via PDZ domain). Interacts with ADRB1 (via C-terminal PDZ motif); the interaction is direct. Interacts (via Ras-associating domain) with RAP1A (via GTP-bound active form). Interacts weakly with HRAS (via GDP- and GTP-bound forms). Interacts (via C-terminal domain) with MAGI2 (via PDZ and WW domains). Interacts with CDH1 and TJP1. Interacts with CTNNB1. Ubiquitinated by NEDD4, leading to proteasomal degradation. Post-translationally, phosphorylation by PLK2 promotes its activity.

It is found in the cytoplasm. The protein resides in the perinuclear region. It localises to the cell membrane. Its subcellular location is the late endosome. The protein localises to the cell junction. Functions as a guanine nucleotide exchange factor (GEF), which activates Rap and Ras family of small GTPases by exchanging bound GDP for free GTP in a cAMP-dependent manner. Serves as a link between cell surface receptors and Rap/Ras GTPases in intracellular signaling cascades. Also acts as an effector for Rap1 by direct association with Rap1-GTP thereby leading to the amplification of Rap1-mediated signaling. Shows weak activity on HRAS. It is controversial whether RAPGEF2 binds cAMP and cGMP or not. Its binding to ligand-activated beta-1 adrenergic receptor ADRB1 leads to the Ras activation through the G(s)-alpha signaling pathway. Involved in the cAMP-induced Ras and Erk1/2 signaling pathway that leads to sustained inhibition of long term melanogenesis by reducing dendrite extension and melanin synthesis. Also provides inhibitory signals for cell proliferation of melanoma cells and promotes their apoptosis in a cAMP-independent nanner. Regulates cAMP-induced neuritogenesis by mediating the Rap1/B-Raf/ERK signaling through a pathway that is independent on both PKA and RAPGEF3/RAPGEF4. Involved in neuron migration and in the formation of the major forebrain fiber connections forming the corpus callosum, the anterior commissure and the hippocampal commissure during brain development. Involved in neuronal growth factor (NGF)-induced sustained activation of Rap1 at late endosomes and in brain-derived neurotrophic factor (BDNF)-induced axon outgrowth of hippocampal neurons. Plays a role in the regulation of embryonic blood vessel formation and in the establishment of basal junction integrity and endothelial barrier function. May be involved in the regulation of the vascular endothelial growth factor receptor KDR and cadherin CDH5 expression at allantois endothelial cell-cell junctions. Binds to cAMP. The polypeptide is Rap guanine nucleotide exchange factor 2 (RAPGEF2) (Bos taurus (Bovine)).